The following is a 394-amino-acid chain: RHOMBOID-like protein 4 (394 aa).

Residues 1-51 (MGEKDSETAPIWGKTRERERSNNNNIQPMDLESSSSVSGQQRSLTQSRSSY) form a disordered region. Residues 39–49 (GQQRSLTQSRS) are compositionally biased toward polar residues. 7 helical membrane-spanning segments follow: residues 64-84 (WFPW…VITM), 147-167 (WLHG…FIGI), 175-195 (FIRI…LSAL), 201-221 (ISVG…SEIF), 231-251 (VVTI…GVLP), 254-274 (DNFA…VLLI), and 300-320 (ILWT…LISL). Serine 206 acts as the Nucleophile in catalysis. Histidine 258 serves as the catalytic Charge relay system.

The protein belongs to the peptidase S54 family.

It localises to the membrane. It catalyses the reaction Cleaves type-1 transmembrane domains using a catalytic dyad composed of serine and histidine that are contributed by different transmembrane domains.. Its function is as follows. Probable rhomboid-type serine protease that catalyzes intramembrane proteolysis. This Arabidopsis thaliana (Mouse-ear cress) protein is RHOMBOID-like protein 4.